The chain runs to 523 residues: Bifunctional purine biosynthesis protein PurH (523 aa).

Positions 1–145 (MIKQALLSVS…KNHRDVTVIV (145 aa)) constitute an MGS-like domain.

The protein belongs to the PurH family.

The enzyme catalyses (6R)-10-formyltetrahydrofolate + 5-amino-1-(5-phospho-beta-D-ribosyl)imidazole-4-carboxamide = 5-formamido-1-(5-phospho-D-ribosyl)imidazole-4-carboxamide + (6S)-5,6,7,8-tetrahydrofolate. It carries out the reaction IMP + H2O = 5-formamido-1-(5-phospho-D-ribosyl)imidazole-4-carboxamide. Its pathway is purine metabolism; IMP biosynthesis via de novo pathway; 5-formamido-1-(5-phospho-D-ribosyl)imidazole-4-carboxamide from 5-amino-1-(5-phospho-D-ribosyl)imidazole-4-carboxamide (10-formyl THF route): step 1/1. It functions in the pathway purine metabolism; IMP biosynthesis via de novo pathway; IMP from 5-formamido-1-(5-phospho-D-ribosyl)imidazole-4-carboxamide: step 1/1. The chain is Bifunctional purine biosynthesis protein PurH from Cupriavidus pinatubonensis (strain JMP 134 / LMG 1197) (Cupriavidus necator (strain JMP 134)).